Here is a 405-residue protein sequence, read N- to C-terminus: Arginine biosynthesis bifunctional protein ArgJ (405 aa).

6 residues coordinate substrate: threonine 152, lysine 178, threonine 189, glutamate 276, asparagine 400, and threonine 405. Residue threonine 189 is the Nucleophile of the active site.

Belongs to the ArgJ family. Heterotetramer of two alpha and two beta chains.

The protein localises to the cytoplasm. The catalysed reaction is N(2)-acetyl-L-ornithine + L-glutamate = N-acetyl-L-glutamate + L-ornithine. It carries out the reaction L-glutamate + acetyl-CoA = N-acetyl-L-glutamate + CoA + H(+). The protein operates within amino-acid biosynthesis; L-arginine biosynthesis; L-ornithine and N-acetyl-L-glutamate from L-glutamate and N(2)-acetyl-L-ornithine (cyclic): step 1/1. Its pathway is amino-acid biosynthesis; L-arginine biosynthesis; N(2)-acetyl-L-ornithine from L-glutamate: step 1/4. Functionally, catalyzes two activities which are involved in the cyclic version of arginine biosynthesis: the synthesis of N-acetylglutamate from glutamate and acetyl-CoA as the acetyl donor, and of ornithine by transacetylation between N(2)-acetylornithine and glutamate. The chain is Arginine biosynthesis bifunctional protein ArgJ from Pseudomonas putida (strain ATCC 47054 / DSM 6125 / CFBP 8728 / NCIMB 11950 / KT2440).